Here is a 175-residue protein sequence, read N- to C-terminus: Ribosome maturation factor RimM (175 aa).

The PRC barrel domain occupies 98–172; it reads DGEFHVRDLQ…WLLITPPKGL (75 aa).

This sequence belongs to the RimM family. Binds ribosomal protein uS19.

The protein localises to the cytoplasm. Its function is as follows. An accessory protein needed during the final step in the assembly of 30S ribosomal subunit, possibly for assembly of the head region. Essential for efficient processing of 16S rRNA. May be needed both before and after RbfA during the maturation of 16S rRNA. It has affinity for free ribosomal 30S subunits but not for 70S ribosomes. This is Ribosome maturation factor RimM from Synechococcus sp. (strain RCC307).